The primary structure comprises 307 residues: Voltage-dependent anion channel-forming protein sll1024 (307 aa).

The next 4 membrane-spanning stretches (helical) occupy residues 26 to 46 (VIPA…GVTL), 54 to 74 (FSIP…LLVF), 226 to 246 (LIFL…HWAT), and 247 to 267 (AFVV…GVEI).

It belongs to the anion channel-forming bestrophin (TC 1.A.46) family.

It localises to the cell membrane. This chain is Voltage-dependent anion channel-forming protein sll1024, found in Synechocystis sp. (strain ATCC 27184 / PCC 6803 / Kazusa).